Consider the following 90-residue polypeptide: DNA-directed RNA polymerase subunit omega (90 aa).

The protein belongs to the RNA polymerase subunit omega family. In terms of assembly, the RNAP catalytic core consists of 2 alpha, 1 beta, 1 beta' and 1 omega subunit. When a sigma factor is associated with the core the holoenzyme is formed, which can initiate transcription.

The catalysed reaction is RNA(n) + a ribonucleoside 5'-triphosphate = RNA(n+1) + diphosphate. Promotes RNA polymerase assembly. Latches the N- and C-terminal regions of the beta' subunit thereby facilitating its interaction with the beta and alpha subunits. This Streptomyces griseus subsp. griseus (strain JCM 4626 / CBS 651.72 / NBRC 13350 / KCC S-0626 / ISP 5235) protein is DNA-directed RNA polymerase subunit omega.